A 365-amino-acid chain; its full sequence is Probable flavin mononucleotide-dependent alkene reductase (365 aa).

FMN is bound by residues 30 to 32 (PLT), Ala-63, and Gln-105. The Proton donor role is filled by Tyr-191. FMN is bound by residues Arg-238, Ser-303, and 324–325 (GT).

The protein belongs to the NADH:flavin oxidoreductase/NADH oxidase family. Monomer. It depends on FMN as a cofactor.

Its subcellular location is the cytoplasm. The protein localises to the cytosol. Functionally, may function as a flavin mononucleotide (FMN)-dependent alkene reductase on substrates carrying alpha,beta-unsaturated carbonyl groups (ketones, aldehydes, carboxylic acids, esters, lactones or cyclic imides). The catalysis depends on NAD(P)H, which acts as a hydride donor for the reduction. Seems to be involved in metabolic pathways required for efficient replication of amastigotes within macrophages. In terms of biological role, acts as a FMN-dependent nitroreductase that activates anti-leishmanial bicyclic nitroaromatic prodrugs including delamanid, DNDI-VL-2098 and (R)-PA-824, forming toxic products that kill the parasites. This is Probable flavin mononucleotide-dependent alkene reductase from Leishmania infantum.